The primary structure comprises 483 residues: Glycogen synthase (483 aa).

Residue K18 participates in ADP-alpha-D-glucose binding.

It belongs to the glycosyltransferase 1 family. Bacterial/plant glycogen synthase subfamily.

The catalysed reaction is [(1-&gt;4)-alpha-D-glucosyl](n) + ADP-alpha-D-glucose = [(1-&gt;4)-alpha-D-glucosyl](n+1) + ADP + H(+). The protein operates within glycan biosynthesis; glycogen biosynthesis. Synthesizes alpha-1,4-glucan chains using ADP-glucose. The polypeptide is Glycogen synthase (Methylocella silvestris (strain DSM 15510 / CIP 108128 / LMG 27833 / NCIMB 13906 / BL2)).